The chain runs to 802 residues: MARYNPLAFTSGPVVFFITITYTALLIALLLTHLTLPSYPSHPPLGINLTQAWSDLEHITREFHPYNSHANDNVRAYLLSRIEHMMASKKLGSDQVQIIDDNISNATFSSGNTTVYFEGTNLIVAVRGSHDDQAFNDRNRRPDNGGVLVNAHYDSVSSGYGATDDGVGVVSVLQLLSFFTEPKNWPKRTVVLLLNNGEEDFLNGAKAFMRHDISQVPHTFVNLEGAGAGGRAAMFRSTDTHVTRFYRKSEHPFGTVVSGDGFKKGLVRSETDYKVFFEELGLAGLDIAFIEPRAKYHTIEDSTRETSLNSVWHMLSAAIATTSGLAADTSTPDRESHDDAVWFDIFGKVFIVFQLHTFFALCVTLLVVAPLTLIGLAWSLHKADRNYLFARKAFVYSADDDEPIHLYGWRGFFRFPIAFGIATSIVVGLAMMLSAWFAVSWFLLHGADAMRPSALQRMYSLLWLFIGSFCLLVFFTILANNHQVAAGYPSLFCFATVFLANVLSFLELFLAPPKSAYAWNVHQNADGGSRPLTSSATAARSDNRATTDDDATETTSLLSGNRRSFARHDAGRRDAINEGANSQEPESRRRLDLGQPHSGEQEWSGKLPSWIWIVQFSLLAPMIVILVGQIALLLTSALYQTPSDGNSPLYIYTSIAALAVFLVAPIGPFIHRFTHHVPTFLFLLCVATTIYNLVAFPFSEQHKLKVYFVQRVDCDTGVNTVSLTGLDGYVQRIAGNMPSAQQSSLNCSTPDIVTRKELRMCEWEGLHPNVVSPTSQYSNKTRATDWIDYEIFHDDSNNRGRR.

At 1–13 (MARYNPLAFTSGP) the chain is on the cytoplasmic side. A helical transmembrane segment spans residues 14–34 (VVFFITITYTALLIALLLTHL). The Vacuolar segment spans residues 35–357 (TLPSYPSHPP…KVFIVFQLHT (323 aa)). N-linked (GlcNAc...) asparagine glycosylation is found at Asn-48, Asn-102, Asn-105, and Asn-112. His-152 and Asp-164 together coordinate Zn(2+). Glu-198 (proton acceptor) is an active-site residue. The Zn(2+) site is built by Glu-199, Glu-224, and His-297. A helical transmembrane segment spans residues 358–378 (FFALCVTLLVVAPLTLIGLAW). The Cytoplasmic segment spans residues 379–389 (SLHKADRNYLF). The helical transmembrane segment at 390–409 (ARKAFVYSADDDEPIHLYGW) threads the bilayer. The Vacuolar segment spans residues 410–423 (RGFFRFPIAFGIAT). A helical transmembrane segment spans residues 424–444 (SIVVGLAMMLSAWFAVSWFLL). Over 445 to 457 (HGADAMRPSALQR) the chain is Cytoplasmic. Residues 458–478 (MYSLLWLFIGSFCLLVFFTIL) traverse the membrane as a helical segment. At 479-490 (ANNHQVAAGYPS) the chain is on the vacuolar side. A helical transmembrane segment spans residues 491-511 (LFCFATVFLANVLSFLELFLA). The Cytoplasmic segment spans residues 512–609 (PPKSAYAWNV…EQEWSGKLPS (98 aa)). 2 disordered regions span residues 528-554 (GSRP…ATET) and 570-603 (AGRR…EQEW). The helical transmembrane segment at 610–630 (WIWIVQFSLLAPMIVILVGQI) threads the bilayer. Residues 631 to 649 (ALLLTSALYQTPSDGNSPL) lie on the Vacuolar side of the membrane. A helical transmembrane segment spans residues 650–670 (YIYTSIAALAVFLVAPIGPFI). Over 671-677 (HRFTHHV) the chain is Cytoplasmic. A helical membrane pass occupies residues 678 to 698 (PTFLFLLCVATTIYNLVAFPF). The Vacuolar portion of the chain corresponds to 699-802 (SEQHKLKVYF…HDDSNNRGRR (104 aa)). N-linked (GlcNAc...) asparagine glycosylation is found at Asn-746 and Asn-779.

This sequence belongs to the peptidase M28 family. The cofactor is Zn(2+).

It localises to the vacuole membrane. Functionally, may be involved in vacuolar sorting and osmoregulation. This chain is Vacuolar membrane protease, found in Leptosphaeria maculans (strain JN3 / isolate v23.1.3 / race Av1-4-5-6-7-8) (Blackleg fungus).